The primary structure comprises 283 residues: Polyamine aminopropyltransferase (283 aa).

The PABS domain maps to Thr-5–Lys-238. Residue Gln-32 participates in S-methyl-5'-thioadenosine binding. The spermidine site is built by His-63 and Asp-87. S-methyl-5'-thioadenosine is bound by residues Glu-107 and Asp-139–Gly-140. Asp-158 serves as the catalytic Proton acceptor. Asp-158 to Asp-161 contributes to the spermidine binding site.

The protein belongs to the spermidine/spermine synthase family. As to quaternary structure, homodimer or homotetramer.

The protein resides in the cytoplasm. The catalysed reaction is S-adenosyl 3-(methylsulfanyl)propylamine + putrescine = S-methyl-5'-thioadenosine + spermidine + H(+). It functions in the pathway amine and polyamine biosynthesis; spermidine biosynthesis; spermidine from putrescine: step 1/1. Functionally, catalyzes the irreversible transfer of a propylamine group from the amino donor S-adenosylmethioninamine (decarboxy-AdoMet) to putrescine (1,4-diaminobutane) to yield spermidine. This is Polyamine aminopropyltransferase from Prochlorococcus marinus (strain MIT 9515).